Consider the following 208-residue polypeptide: MESLSKYKLVFLGDQSVGKTSIITRFMYDTFDITYQATIGIDFLSKTMYLEDRTVRLQLWDTAGQERFRSLIPSYIRDSSVAIVVYDITNKVSFTNTIKWIEDVRNERGNNVVIMLVGNKTDLADKRQVSIEEGEAKAKEYDIMFTETSAKAGFNIKALFRKVASALPGIDSNSMTKNQHEIISEVDITDGGKPALKEGDGFCSSSRC.

Residues 14 to 21 (DQSVGKTS), Thr-38, 62 to 66 (TAGQE), and 120 to 123 (KTDL) contribute to the GTP site. Cys-208 carries the S-geranylgeranyl cysteine lipid modification.

Belongs to the small GTPase superfamily. Rab family.

In terms of biological role, protein transport. Probably involved in vesicular traffic. This Dictyostelium discoideum (Social amoeba) protein is Ras-related protein Rab-6 (rab6).